A 507-amino-acid polypeptide reads, in one-letter code: MDIRFQAGGHAAWRAGAVMVFVFKDEPLAEVDSQLVEAAPWLTIAPAGNDFRAAKDEVAVLHGPPAFDIPRVVAVGLGKREDCTLERIRLAAAAGIRRCRDLRVENVGVVAAQLGRMAPTEHDALRVAEEVVCGALLGLYRYDRFRTVKDDERAEDPRWLALLCEGKNVPDDLHGAARKGEAVALGMGVARDLVNGPANIVTPAFLASEAEALGRKHGFRVEVLGRDELSSMGMGAFASVFRGAEEEARLIVIEHAPAGTEEQQPLVFVGKGVTFDTGGISLKPAAKMHEMKGDMAGAAAILGLFAALGERDLPRRVVGVLPCTENMPDGRATRPGDVVTTLSGKTVEILNTDAEGRLLLCDALTYAQRRWQPEALVDLATLTGACVVALGTEVAGLFCDDAALADAIASRGETVGDLFWPLPLWKSYAENLKSDVADLANVGPREGGAVNAALFLRQFIDDGVRWAHLDIAGPAFTAKKSALCPGGGTGFAVRTLFELVSEGIPAA.

Residues K271 and D276 each coordinate Mn(2+). Residue K283 is part of the active site. Residues D294, D353, and E355 each contribute to the Mn(2+) site. R357 is an active-site residue.

It belongs to the peptidase M17 family. Mn(2+) is required as a cofactor.

The protein resides in the cytoplasm. The catalysed reaction is Release of an N-terminal amino acid, Xaa-|-Yaa-, in which Xaa is preferably Leu, but may be other amino acids including Pro although not Arg or Lys, and Yaa may be Pro. Amino acid amides and methyl esters are also readily hydrolyzed, but rates on arylamides are exceedingly low.. It catalyses the reaction Release of an N-terminal amino acid, preferentially leucine, but not glutamic or aspartic acids.. Functionally, presumably involved in the processing and regular turnover of intracellular proteins. Catalyzes the removal of unsubstituted N-terminal amino acids from various peptides. The polypeptide is Probable cytosol aminopeptidase (Nitratidesulfovibrio vulgaris (strain ATCC 29579 / DSM 644 / CCUG 34227 / NCIMB 8303 / VKM B-1760 / Hildenborough) (Desulfovibrio vulgaris)).